A 351-amino-acid polypeptide reads, in one-letter code: Dihydroorotate dehydrogenase (quinone) (351 aa).

FMN contacts are provided by residues 67-71 (AGFDK) and Thr-91. Residue Lys-71 coordinates substrate. 116 to 120 (NAMGF) contacts substrate. The FMN site is built by Asn-145 and Asn-178. Substrate is bound at residue Asn-178. The active-site Nucleophile is Ser-181. Asn-183 contacts substrate. FMN contacts are provided by Lys-214 and Thr-242. 243–244 (NT) contacts substrate. Residues Gly-262, Gly-291, and 312–313 (YS) contribute to the FMN site.

This sequence belongs to the dihydroorotate dehydrogenase family. Type 2 subfamily. In terms of assembly, monomer. FMN is required as a cofactor.

Its subcellular location is the cell membrane. The enzyme catalyses (S)-dihydroorotate + a quinone = orotate + a quinol. It participates in pyrimidine metabolism; UMP biosynthesis via de novo pathway; orotate from (S)-dihydroorotate (quinone route): step 1/1. Its function is as follows. Catalyzes the conversion of dihydroorotate to orotate with quinone as electron acceptor. This is Dihydroorotate dehydrogenase (quinone) from Helicobacter pylori (strain HPAG1).